A 463-amino-acid polypeptide reads, in one-letter code: Increased DNA methylation 3 (463 aa).

Positions Asn169–Arg182 are enriched in basic and acidic residues. 2 disordered regions span residues Asn169 to Ser199 and Arg300 to Thr347. A compositionally biased stretch (polar residues) spans Gly184–Ser199. Residues Arg300–Thr310 show a composition bias toward basic residues.

In terms of assembly, interacts with MBD7 (via C-terminus), IDM1 and IDM2. Part of a complex made of MBD7, IDM1, IDM2 and IDM3.

It is found in the nucleus. Acts as an anti-silencing factor that prevents DNA hypermethylation and gene repression. This is Increased DNA methylation 3 from Arabidopsis thaliana (Mouse-ear cress).